We begin with the raw amino-acid sequence, 378 residues long: Dual-specificity RNA methyltransferase RlmN (378 aa).

Catalysis depends on Glu97, which acts as the Proton acceptor. In terms of domain architecture, Radical SAM core spans Glu103–Asp341. Cys110 and Cys346 are disulfide-bonded. Positions 117, 121, and 124 each coordinate [4Fe-4S] cluster. S-adenosyl-L-methionine contacts are provided by residues Gly171–Glu172, Ser203, Ser225–His227, and Asn303. Cys346 acts as the S-methylcysteine intermediate in catalysis.

This sequence belongs to the radical SAM superfamily. RlmN family. It depends on [4Fe-4S] cluster as a cofactor.

It localises to the cytoplasm. It carries out the reaction adenosine(2503) in 23S rRNA + 2 reduced [2Fe-2S]-[ferredoxin] + 2 S-adenosyl-L-methionine = 2-methyladenosine(2503) in 23S rRNA + 5'-deoxyadenosine + L-methionine + 2 oxidized [2Fe-2S]-[ferredoxin] + S-adenosyl-L-homocysteine. It catalyses the reaction adenosine(37) in tRNA + 2 reduced [2Fe-2S]-[ferredoxin] + 2 S-adenosyl-L-methionine = 2-methyladenosine(37) in tRNA + 5'-deoxyadenosine + L-methionine + 2 oxidized [2Fe-2S]-[ferredoxin] + S-adenosyl-L-homocysteine. Its function is as follows. Specifically methylates position 2 of adenine 2503 in 23S rRNA and position 2 of adenine 37 in tRNAs. m2A2503 modification seems to play a crucial role in the proofreading step occurring at the peptidyl transferase center and thus would serve to optimize ribosomal fidelity. This Idiomarina loihiensis (strain ATCC BAA-735 / DSM 15497 / L2-TR) protein is Dual-specificity RNA methyltransferase RlmN.